A 255-amino-acid polypeptide reads, in one-letter code: tRNA (guanine-N(1)-)-methyltransferase (255 aa).

Residues Gly-113 and Ile-133 to Leu-138 contribute to the S-adenosyl-L-methionine site.

Belongs to the RNA methyltransferase TrmD family. As to quaternary structure, homodimer.

The protein localises to the cytoplasm. The enzyme catalyses guanosine(37) in tRNA + S-adenosyl-L-methionine = N(1)-methylguanosine(37) in tRNA + S-adenosyl-L-homocysteine + H(+). Specifically methylates guanosine-37 in various tRNAs. The polypeptide is tRNA (guanine-N(1)-)-methyltransferase (Serratia proteamaculans (strain 568)).